The chain runs to 507 residues: MEFSVRAAELTTLLESRITNFYTNFQVDEIGRVVSVGDGIARVYGLNEIQAGELVEFASGVKGIALNLENENVGIVVFGSDTSIKEGDLVKRTGSIVDVPAGKAMLGRVVDALGVPIDGRGALSDHERRRVEVKAPGIIERKSVHEPMQTGLKAVDSLVPIGRGQRELIIGDRQTGKTAIAIDTILNQKQMNSRATSESETLYCVYVAIGQKRSTVAQLVQILSEANALEYSILVAATASDPAPLQFLAPYSGCAMGEYFRDNGMHALIIYDDLSKQAVAYRQMSLLLRRPPGREAFPGDVFYLHSRLLERAAKRSDQTGAGSLTALPVIETQAGDVSAYIPTNVISITDGQICLETELFYRGIRPAINVGLSVSRVGSAAQLKAMKQVCGSLKLELAQYREVAAFAQFGSDLDAATQALLNRGARLTEVLKQPQYAPLPIEKQILVIYAAVNGFCDRMPLDKIAQYERDILSTIKQELLQSLKGGLTGERKIEPDAFLKEKALSLI.

171-178 (GDRQTGKT) serves as a coordination point for ATP.

The protein belongs to the ATPase alpha/beta chains family. As to quaternary structure, F-type ATPases have 2 components, CF(1) - the catalytic core - and CF(0) - the membrane proton channel. CF(1) has five subunits: alpha(3), beta(3), gamma(1), delta(1), epsilon(1). CF(0) has three main subunits: a, b and c.

Its subcellular location is the mitochondrion. The protein localises to the mitochondrion inner membrane. Its function is as follows. Mitochondrial membrane ATP synthase (F(1)F(0) ATP synthase or Complex V) produces ATP from ADP in the presence of a proton gradient across the membrane which is generated by electron transport complexes of the respiratory chain. F-type ATPases consist of two structural domains, F(1) - containing the extramembraneous catalytic core, and F(0) - containing the membrane proton channel, linked together by a central stalk and a peripheral stalk. During catalysis, ATP synthesis in the catalytic domain of F(1) is coupled via a rotary mechanism of the central stalk subunits to proton translocation. Subunits alpha and beta form the catalytic core in F(1). Rotation of the central stalk against the surrounding alpha(3)beta(3) subunits leads to hydrolysis of ATP in three separate catalytic sites on the beta subunits. Subunit alpha does not bear the catalytic high-affinity ATP-binding sites. This chain is ATP synthase subunit alpha, mitochondrial (ATPA), found in Pisum sativum (Garden pea).